The primary structure comprises 508 residues: Photosystem II CP47 reaction center protein (508 aa).

6 consecutive transmembrane segments (helical) span residues 21–36, 101–115, 140–156, 203–218, 237–252, and 457–472; these read AVHI…WAGS, IVFS…IWHW, GIHL…FGTF, IAAG…FHLS, VLSS…AFVV, and SFAL…HGAR.

This sequence belongs to the PsbB/PsbC family. PsbB subfamily. In terms of assembly, PSII is composed of 1 copy each of membrane proteins PsbA, PsbB, PsbC, PsbD, PsbE, PsbF, PsbH, PsbI, PsbJ, PsbK, PsbL, PsbM, PsbT, PsbX, PsbY, PsbZ, Psb30/Ycf12, at least 3 peripheral proteins of the oxygen-evolving complex and a large number of cofactors. It forms dimeric complexes. Binds multiple chlorophylls. PSII binds additional chlorophylls, carotenoids and specific lipids. is required as a cofactor.

The protein localises to the plastid. It is found in the chloroplast thylakoid membrane. One of the components of the core complex of photosystem II (PSII). It binds chlorophyll and helps catalyze the primary light-induced photochemical processes of PSII. PSII is a light-driven water:plastoquinone oxidoreductase, using light energy to abstract electrons from H(2)O, generating O(2) and a proton gradient subsequently used for ATP formation. The polypeptide is Photosystem II CP47 reaction center protein (Citrus sinensis (Sweet orange)).